The primary structure comprises 529 residues: Peptide chain release factor 3 (529 aa).

The region spanning 11–280 is the tr-type G domain; the sequence is SKRRTFAIIS…GLTEWAPAPK (270 aa). Residues 20 to 27, 88 to 92, and 142 to 145 contribute to the GTP site; these read SHPDAGKT, DTPGH, and NKLD.

The protein belongs to the TRAFAC class translation factor GTPase superfamily. Classic translation factor GTPase family. PrfC subfamily.

The protein localises to the cytoplasm. Its function is as follows. Increases the formation of ribosomal termination complexes and stimulates activities of RF-1 and RF-2. It binds guanine nucleotides and has strong preference for UGA stop codons. It may interact directly with the ribosome. The stimulation of RF-1 and RF-2 is significantly reduced by GTP and GDP, but not by GMP. This is Peptide chain release factor 3 from Vibrio parahaemolyticus serotype O3:K6 (strain RIMD 2210633).